Reading from the N-terminus, the 321-residue chain is Malate dehydrogenase (321 aa).

NAD(+) contacts are provided by residues 10–15 and aspartate 34; that span reads GSGMIG. Arginine 83 and arginine 89 together coordinate substrate. Residues asparagine 96 and 119 to 121 each bind NAD(+); that span reads ITN. 2 residues coordinate substrate: asparagine 121 and arginine 152. The active-site Proton acceptor is histidine 176.

This sequence belongs to the LDH/MDH superfamily. MDH type 3 family.

It catalyses the reaction (S)-malate + NAD(+) = oxaloacetate + NADH + H(+). Its function is as follows. Catalyzes the reversible oxidation of malate to oxaloacetate. The sequence is that of Malate dehydrogenase from Chelativorans sp. (strain BNC1).